Here is a 458-residue protein sequence, read N- to C-terminus: Probable mitochondrial chaperone BCS1-B (458 aa).

Topologically, residues 1-26 are mitochondrial intermembrane; sequence MENVITNNNKGLPKSILKFIPEPIQP. A helical membrane pass occupies residues 27–47; the sequence is LFENPFFSAGFGLIGVGSILA. Residues 48-458 lie on the Mitochondrial matrix side of the membrane; that stretch reads MGRKGFQQAM…INNLNELIKK (411 aa). 248–255 lines the ATP pocket; it reads GPPGTGKS.

It belongs to the AAA ATPase family. BCS1 subfamily.

It is found in the mitochondrion inner membrane. It carries out the reaction ATP + H2O = ADP + phosphate + H(+). In terms of biological role, chaperone necessary for the assembly of mitochondrial respiratory chain complex III. This chain is Probable mitochondrial chaperone BCS1-B (bcsl1b), found in Dictyostelium discoideum (Social amoeba).